The following is a 236-amino-acid chain: Ribose-5-phosphate isomerase A (236 aa).

Substrate contacts are provided by residues 31–34 (TGST), 84–87 (DGAD), and 97–100 (KGGG). The active-site Proton acceptor is the E106. K124 provides a ligand contact to substrate.

The protein belongs to the ribose 5-phosphate isomerase family. In terms of assembly, homodimer.

It carries out the reaction aldehydo-D-ribose 5-phosphate = D-ribulose 5-phosphate. The protein operates within carbohydrate degradation; pentose phosphate pathway; D-ribose 5-phosphate from D-ribulose 5-phosphate (non-oxidative stage): step 1/1. Functionally, catalyzes the reversible conversion of ribose-5-phosphate to ribulose 5-phosphate. This Polynucleobacter necessarius subsp. necessarius (strain STIR1) protein is Ribose-5-phosphate isomerase A.